The following is a 470-amino-acid chain: tRNA-2-methylthio-N(6)-dimethylallyladenosine synthase (470 aa).

The MTTase N-terminal domain maps to 20-138 (PRVHIETFGC…LPELVERARS (119 aa)). [4Fe-4S] cluster contacts are provided by cysteine 29, cysteine 65, cysteine 99, cysteine 176, cysteine 180, and cysteine 183. Residues 162 to 398 (REGDLKAWVT…MEVQNRIARA (237 aa)) enclose the Radical SAM core domain. The 64-residue stretch at 401–464 (EARVGKVYDI…TWTLEGELVE (64 aa)) folds into the TRAM domain.

It belongs to the methylthiotransferase family. MiaB subfamily. In terms of assembly, monomer. The cofactor is [4Fe-4S] cluster.

The protein localises to the cytoplasm. It catalyses the reaction N(6)-dimethylallyladenosine(37) in tRNA + (sulfur carrier)-SH + AH2 + 2 S-adenosyl-L-methionine = 2-methylsulfanyl-N(6)-dimethylallyladenosine(37) in tRNA + (sulfur carrier)-H + 5'-deoxyadenosine + L-methionine + A + S-adenosyl-L-homocysteine + 2 H(+). Functionally, catalyzes the methylthiolation of N6-(dimethylallyl)adenosine (i(6)A), leading to the formation of 2-methylthio-N6-(dimethylallyl)adenosine (ms(2)i(6)A) at position 37 in tRNAs that read codons beginning with uridine. The protein is tRNA-2-methylthio-N(6)-dimethylallyladenosine synthase of Symbiobacterium thermophilum (strain DSM 24528 / JCM 14929 / IAM 14863 / T).